Here is a 558-residue protein sequence, read N- to C-terminus: Kelch-like protein 23 (558 aa).

The region spanning 36–104 (TDITLQCPSG…AYTSQIEITK (69 aa)) is the BTB domain. Residues 139 to 240 (CIGMHSFAEF…DPVYLKTALG (102 aa)) enclose the BACK domain. Kelch repeat units follow at residues 274–320 (TMYI…CLGP), 321–369 (NIYV…TLGG), 370–416 (CVYA…VLHD), 418–466 (IYVI…PFEN), 467–508 (KLYL…IMNG), and 510–557 (IYVT…CVYN).

This is Kelch-like protein 23 (KLHL23) from Homo sapiens (Human).